Consider the following 403-residue polypeptide: Succinoglycan biosynthesis protein ExoL (403 aa).

It localises to the cytoplasm. It functions in the pathway glycan metabolism; exopolysaccharide biosynthesis. Its function is as follows. Essential for succinoglycan (EPS I) synthesis and nodule infection. Glycosyltransferase needed for the addition of the third sugar (glucose), catalyzes the formation of a beta-1,4 linkage between the second and third sugars. In Rhizobium meliloti (strain 1021) (Ensifer meliloti), this protein is Succinoglycan biosynthesis protein ExoL (exoL).